Here is a 360-residue protein sequence, read N- to C-terminus: uncharacterized protein (360 aa).

One can recognise an ABC transporter domain in the interval L4–I235. G37–S44 contributes to the ATP binding site.

It belongs to the ABC transporter superfamily.

This is an uncharacterized protein from Escherichia coli O6:H1 (strain CFT073 / ATCC 700928 / UPEC).